A 315-amino-acid chain; its full sequence is Putative quercetin 2,3-dioxygenase PA1205 (315 aa).

A divalent metal cation contacts are provided by histidine 77, histidine 79, histidine 121, and glutamate 123.

It belongs to the pirin family. Requires a divalent metal cation as cofactor.

The enzyme catalyses quercetin + O2 = 2-(3,4-dihydroxybenzoyloxy)-4,6-dihydroxybenzoate + CO. It functions in the pathway flavonoid metabolism; quercetin degradation. Putative quercetin 2,3-dioxygenase. The chain is Putative quercetin 2,3-dioxygenase PA1205 from Pseudomonas aeruginosa (strain ATCC 15692 / DSM 22644 / CIP 104116 / JCM 14847 / LMG 12228 / 1C / PRS 101 / PAO1).